The following is a 284-amino-acid chain: Sulfotransferase 4A1 (284 aa).

Phosphothreonine occurs at positions 8, 11, and 205.

The protein belongs to the sulfotransferase 1 family. In terms of tissue distribution, highly expressed in the cerebral cortex and frontal lobe, slightly less in the cerebellum, occipital and temporal lobes, relatively low in the medulla and putamen, and lowest in the spinal cord. No expression detected in the pancreas. Highly expressed in fetal brain and occipital lobe, slightly less in the whole brain, frontal lobe, hippocampus, and lung, very low expression in cerebellum, medulla oblongata, temporal lobe, testis, kidney and appendix.

It is found in the cytoplasm. In terms of biological role, atypical sulfotransferase family member with very low affinity for 3'-phospho-5'-adenylyl sulfate (PAPS) and very low catalytic activity towards L-triiodothyronine, thyroxine, estrone, p-nitrophenol, 2-naphthylamine, and 2-beta-naphthol. May have a role in the metabolism of drugs and neurotransmitters in the CNS. This Homo sapiens (Human) protein is Sulfotransferase 4A1 (SULT4A1).